The following is a 241-amino-acid chain: Octanoyltransferase (241 aa).

The 190-residue stretch at 38 to 227 folds into the BPL/LPL catalytic domain; that stretch reads AGGPDTLLLL…AVCNALDGAL (190 aa). Substrate is bound by residues 85 to 92, 157 to 159, and 170 to 172; these read RGGKITWH, AIG, and GFA. The active-site Acyl-thioester intermediate is the Cys-188.

Belongs to the LipB family.

It is found in the cytoplasm. It carries out the reaction octanoyl-[ACP] + L-lysyl-[protein] = N(6)-octanoyl-L-lysyl-[protein] + holo-[ACP] + H(+). It functions in the pathway protein modification; protein lipoylation via endogenous pathway; protein N(6)-(lipoyl)lysine from octanoyl-[acyl-carrier-protein]: step 1/2. Catalyzes the transfer of endogenously produced octanoic acid from octanoyl-acyl-carrier-protein onto the lipoyl domains of lipoate-dependent enzymes. Lipoyl-ACP can also act as a substrate although octanoyl-ACP is likely to be the physiological substrate. The sequence is that of Octanoyltransferase from Mycobacterium ulcerans (strain Agy99).